A 574-amino-acid polypeptide reads, in one-letter code: Iron hydrogenase 1 (574 aa).

The 2Fe-2S ferredoxin-type domain maps to 1-78 (MKTIIINGVQ…GMIINTNSDA (78 aa)). Positions 34, 46, 49, and 62 each coordinate [2Fe-2S] cluster. The 4Fe-4S His(Cys)3-ligated-type domain occupies 78–117 (AVNEKIKSRISQLLDIHEFKCGPCNRRENCEFLKLVIKYK). [4Fe-4S] cluster contacts are provided by H94, C98, C101, C107, C147, C150, C153, C157, C190, C193, C196, C200, C300, C355, C499, and C503. 2 4Fe-4S ferredoxin-type domains span residues 138–167 (KSLT…YAMK) and 181–210 (DEKC…EKSH). C503 is a Fe(2+) binding site.

Monomer. The cofactor is [2Fe-2S] cluster. Requires [4Fe-4S] cluster as cofactor. Fe(2+) is required as a cofactor.

It catalyses the reaction H2 + 2 oxidized [2Fe-2S]-[ferredoxin] = 2 reduced [2Fe-2S]-[ferredoxin] + 2 H(+). The chain is Iron hydrogenase 1 from Clostridium pasteurianum.